The chain runs to 113 residues: Large ribosomal subunit protein eL30 (113 aa).

This sequence belongs to the eukaryotic ribosomal protein eL30 family.

This Spodoptera frugiperda (Fall armyworm) protein is Large ribosomal subunit protein eL30 (RpL30).